Reading from the N-terminus, the 402-residue chain is Putative nickel insertion protein (402 aa).

It belongs to the LarC family.

This chain is Putative nickel insertion protein, found in Synechococcus elongatus (strain ATCC 33912 / PCC 7942 / FACHB-805) (Anacystis nidulans R2).